We begin with the raw amino-acid sequence, 131 residues long: Ribosome-binding factor A (131 aa).

This sequence belongs to the RbfA family. Monomer. Binds 30S ribosomal subunits, but not 50S ribosomal subunits or 70S ribosomes.

The protein resides in the cytoplasm. Functionally, one of several proteins that assist in the late maturation steps of the functional core of the 30S ribosomal subunit. Associates with free 30S ribosomal subunits (but not with 30S subunits that are part of 70S ribosomes or polysomes). Required for efficient processing of 16S rRNA. May interact with the 5'-terminal helix region of 16S rRNA. This chain is Ribosome-binding factor A, found in Gloeothece citriformis (strain PCC 7424) (Cyanothece sp. (strain PCC 7424)).